Consider the following 879-residue polypeptide: Metabotropic glutamate receptor 3 (879 aa).

The first 24 residues, 1 to 24 (MKMLTRLQVLTLALFSKGFLLSLG), serve as a signal peptide directing secretion. Over 25 to 577 (DHNFLRREIK…DYIRWEDAWA (553 aa)) the chain is Extracellular. A disulfide bridge links Cys57 with Cys99. Residues Ser151 and 172–174 (AST) each bind L-glutamate. Asn209 carries an N-linked (GlcNAc...) asparagine glycan. Tyr222 contacts L-glutamate. 7 disulfide bridges follow: Cys240-Cys527, Cys361-Cys373, Cys412-Cys419, Cys509-Cys528, Cys513-Cys531, Cys534-Cys546, and Cys549-Cys562. An N-linked (GlcNAc...) asparagine glycan is attached at Asn292. Asp301 contacts L-glutamate. Position 389 (Lys389) interacts with L-glutamate. Asn414 and Asn439 each carry an N-linked (GlcNAc...) asparagine glycan. The helical transmembrane segment at 578-598 (IGPVTIACLGFMCTCMVITVF) threads the bilayer. At 599–613 (IKHNNTPLVKASGRE) the chain is on the cytoplasmic side. A helical membrane pass occupies residues 614 to 634 (LCYILLFGVGLSYCMTFFFIA). The Extracellular portion of the chain corresponds to 635-688 (KPSPVICALRRLGLGSSFAICYSALLTKTNCIARIFDGVKNGAQRPKFISPSSQ). Residues 689–709 (VFICLGLILVQIVMVSVWLIL) traverse the membrane as a helical segment. Residues 710–735 (EAPGTRRYTLAEKRETVILKCNVKDS) are Cytoplasmic-facing. The chain crosses the membrane as a helical span at residues 736–756 (SMLISLTYDVILVILCTVYAF). Residues 757–769 (KTRKCPENFNEAK) lie on the Extracellular side of the membrane. A helical transmembrane segment spans residues 770-790 (FIGFTMYTTCIIWLAFLPIFY). Over 791–807 (VTSSDYRVQTTTMCISV) the chain is Cytoplasmic. The chain crosses the membrane as a helical span at residues 808-828 (SLSGFVVLGCLFAPKVHIILF). Residues 829–879 (QPQKNVVTHRLHLNRFSVSGTGTTYSQSSASMYVPTVCNGREVLDSTTSSL) lie on the Extracellular side of the membrane.

This sequence belongs to the G-protein coupled receptor 3 family. Interacts with TAMALIN.

It is found in the cell membrane. Functionally, G-protein coupled receptor for glutamate. Ligand binding causes a conformation change that triggers signaling via guanine nucleotide-binding proteins (G proteins) and modulates the activity of down-stream effectors. Signaling inhibits adenylate cyclase activity. In Macaca fascicularis (Crab-eating macaque), this protein is Metabotropic glutamate receptor 3 (GRM3).